The primary structure comprises 379 residues: Chaperone protein DnaJ (379 aa).

Residues aspartate 5–glycine 70 enclose the J domain. A CR-type zinc finger spans residues glycine 134–serine 212. Cysteine 147, cysteine 150, cysteine 164, cysteine 167, cysteine 186, cysteine 189, cysteine 200, and cysteine 203 together coordinate Zn(2+). 4 CXXCXGXG motif repeats span residues cysteine 147 to glycine 154, cysteine 164 to glycine 171, cysteine 186 to glycine 193, and cysteine 200 to glycine 207.

The protein belongs to the DnaJ family. As to quaternary structure, homodimer. Zn(2+) is required as a cofactor.

The protein localises to the cytoplasm. Participates actively in the response to hyperosmotic and heat shock by preventing the aggregation of stress-denatured proteins and by disaggregating proteins, also in an autonomous, DnaK-independent fashion. Unfolded proteins bind initially to DnaJ; upon interaction with the DnaJ-bound protein, DnaK hydrolyzes its bound ATP, resulting in the formation of a stable complex. GrpE releases ADP from DnaK; ATP binding to DnaK triggers the release of the substrate protein, thus completing the reaction cycle. Several rounds of ATP-dependent interactions between DnaJ, DnaK and GrpE are required for fully efficient folding. Also involved, together with DnaK and GrpE, in the DNA replication of plasmids through activation of initiation proteins. In Pectobacterium atrosepticum (strain SCRI 1043 / ATCC BAA-672) (Erwinia carotovora subsp. atroseptica), this protein is Chaperone protein DnaJ.